Consider the following 69-residue polypeptide: DNA gyrase inhibitor YacG (69 aa).

Zn(2+) is bound by residues C14, C17, C33, and C37.

This sequence belongs to the DNA gyrase inhibitor YacG family. As to quaternary structure, interacts with GyrB. It depends on Zn(2+) as a cofactor.

In terms of biological role, inhibits all the catalytic activities of DNA gyrase by preventing its interaction with DNA. Acts by binding directly to the C-terminal domain of GyrB, which probably disrupts DNA binding by the gyrase. The protein is DNA gyrase inhibitor YacG of Aliivibrio salmonicida (strain LFI1238) (Vibrio salmonicida (strain LFI1238)).